Consider the following 54-residue polypeptide: Hemoglobin subunit omega (54 aa).

Residues 2–54 (HWTAEEKQIILAIWAKIDIEEAGAAALSRLLVVYPWTQRYFKNFGNLSSPTAI) enclose the Globin domain.

This sequence belongs to the globin family.

Functionally, hemoglobin omega chain is an embryonic-type beta-type chain found in prenatal and neonatal marsupials. This chain is Hemoglobin subunit omega, found in Notamacropus eugenii (Tammar wallaby).